A 74-amino-acid polypeptide reads, in one-letter code: U12-theraphotoxin-Hs1a (74 aa).

A signal peptide spans 1–20; sequence MNVKILLLLVGLNLVMHSNA. A propeptide spanning residues 21-40 is cleaved from the precursor; the sequence is TGDSETNPAETLFIEEIFRR. Intrachain disulfides connect C42-C56, C49-C61, and C55-C71.

Belongs to the neurotoxin 35 family. As to expression, expressed by the venom gland.

The protein resides in the secreted. Putative ion channel inhibitor. This chain is U12-theraphotoxin-Hs1a, found in Cyriopagopus schmidti (Chinese bird spider).